The primary structure comprises 474 residues: Glutathione synthetase (474 aa).

Arg125 contributes to the substrate binding site. Residue Glu144 coordinates ATP. Mg(2+)-binding residues include Glu144 and Asn146. Residues 148–151, 214–216, Gln220, and 267–270 contribute to the substrate site; these read IAAS, QRN, and RTGY. Residues Lys305, 364 to 373, Tyr375, 398 to 401, and Glu425 each bind ATP; these read KPQREGGGNN and MDKI. Glu368 provides a ligand contact to Mg(2+). Arg450 provides a ligand contact to substrate. ATP contacts are provided by Lys452 and Asp458. 461–462 lines the substrate pocket; sequence VA.

Belongs to the eukaryotic GSH synthase family. In terms of assembly, homodimer. The cofactor is Mg(2+). In terms of tissue distribution, expressed ubiquitously.

The enzyme catalyses gamma-L-glutamyl-L-cysteine + glycine + ATP = glutathione + ADP + phosphate + H(+). It catalyses the reaction gamma-L-glutamyl-(2S)-2-aminobutanoate + glycine + ATP = ophthalmate + ADP + phosphate + H(+). It functions in the pathway sulfur metabolism; glutathione biosynthesis; glutathione from L-cysteine and L-glutamate: step 2/2. Its function is as follows. Catalyzes the production of glutathione from gamma-glutamylcysteine and glycine in an ATP-dependent manner. Glutathione (gamma-glutamylcysteinylglycine, GSH) is the most abundant intracellular thiol in living aerobic cells and is required for numerous processes including the protection of cells against oxidative damage, amino acid transport, the detoxification of foreign compounds, the maintenance of protein sulfhydryl groups in a reduced state and acts as a cofactor for a number of enzymes. Participates in ophthalmate biosynthesis in hepatocytes. This chain is Glutathione synthetase, found in Xenopus laevis (African clawed frog).